A 230-amino-acid chain; its full sequence is Probable dual specificity protein phosphatase DDB_G0283417 (230 aa).

Positions 78–230 (NNNYESINLY…LEIFEKELLF (153 aa)) constitute a Tyrosine-protein phosphatase domain. Cys174 functions as the Phosphocysteine intermediate in the catalytic mechanism.

It belongs to the protein-tyrosine phosphatase family. Non-receptor class dual specificity subfamily.

The enzyme catalyses O-phospho-L-tyrosyl-[protein] + H2O = L-tyrosyl-[protein] + phosphate. The catalysed reaction is O-phospho-L-seryl-[protein] + H2O = L-seryl-[protein] + phosphate. It catalyses the reaction O-phospho-L-threonyl-[protein] + H2O = L-threonyl-[protein] + phosphate. In terms of biological role, has a dual specificity toward Ser/Thr and Tyr-containing proteins. This chain is Probable dual specificity protein phosphatase DDB_G0283417, found in Dictyostelium discoideum (Social amoeba).